The sequence spans 452 residues: Histone acetyltransferase type B subunit 2 (452 aa).

6 WD repeats span residues 155–195 (YEDG…NSKE), 205–245 (HHTK…SDGS), 256–296 (HHDA…NKAA), 300–340 (KESR…TPIS), 344–384 (SHCD…DDLS), and 401–441 (GHSS…SNDE).

It belongs to the WD repeat RBAP46/RBAP48/MSI1 family. In terms of assembly, component of the HAT-B complex composed of at least HAT1 and HAT2. The HAT-B complex binds to histone H4 tail.

The protein localises to the cytoplasm. The protein resides in the nucleus. Its function is as follows. Regulatory subunit of the histone acetylase B (HAT-B) complex. The complex acetylates 'Lys-12' of histone H4 which is required for telomeric silencing. The chain is Histone acetyltransferase type B subunit 2 (HAT2) from Yarrowia lipolytica (strain CLIB 122 / E 150) (Yeast).